We begin with the raw amino-acid sequence, 639 residues long: Coiled-coil domain-containing protein 27 (639 aa).

The interval 154–176 (YPRKRSEPSDPSPTGSPTVVKKS) is disordered. Residues 203–242 (QRFSEMESQMQKKDQEILTLQKEKEALKKQLKNLLRGKGT) are a coiled coil. The tract at residues 291-385 (ESSKELHVEP…EECHPKRSYS (95 aa)) is disordered. Residues 292–309 (SSKELHVEPGSAIEEKSS) are compositionally biased toward basic and acidic residues. Over residues 310–320 (EGPPEEAAAAK) the composition is skewed to low complexity. Acidic residues-rich tracts occupy residues 336–350 (GPEE…EVEG) and 358–369 (EGEILVNEEEAS). Residues 370 to 380 (WELREDEECHP) are compositionally biased toward basic and acidic residues.

This chain is Coiled-coil domain-containing protein 27 (Ccdc27), found in Mus musculus (Mouse).